The chain runs to 71 residues: Large ribosomal subunit protein uL29 (71 aa).

It belongs to the universal ribosomal protein uL29 family.

The sequence is that of Large ribosomal subunit protein uL29 from Methanococcus maripaludis (strain C7 / ATCC BAA-1331).